The primary structure comprises 272 residues: N-acetylmuramoyl-L-alanine amidase CwlA (272 aa).

In terms of domain architecture, N-acetylmuramoyl-L-alanine amidase spans 24–142 (KAEYITIHNT…QDWNGKYCPH (119 aa)).

Belongs to the N-acetylmuramoyl-L-alanine amidase 2 family.

The catalysed reaction is Hydrolyzes the link between N-acetylmuramoyl residues and L-amino acid residues in certain cell-wall glycopeptides.. Its function is as follows. Autolysins are involved in some important biological processes such as cell separation, cell-wall turnover, competence for genetic transformation, formation of the flagella and sporulation. The sequence is that of N-acetylmuramoyl-L-alanine amidase CwlA (cwlA) from Bacillus subtilis (strain 168).